A 336-amino-acid chain; its full sequence is Aspartate carbamoyltransferase catalytic subunit (336 aa).

Positions 71 and 72 each coordinate carbamoyl phosphate. Residue K99 coordinates L-aspartate. Carbamoyl phosphate-binding residues include R121, H151, and Q154. L-aspartate contacts are provided by R184 and R239. Carbamoyl phosphate-binding residues include G280 and P281.

Belongs to the aspartate/ornithine carbamoyltransferase superfamily. ATCase family. In terms of assembly, heterododecamer (2C3:3R2) of six catalytic PyrB chains organized as two trimers (C3), and six regulatory PyrI chains organized as three dimers (R2).

It carries out the reaction carbamoyl phosphate + L-aspartate = N-carbamoyl-L-aspartate + phosphate + H(+). Its pathway is pyrimidine metabolism; UMP biosynthesis via de novo pathway; (S)-dihydroorotate from bicarbonate: step 2/3. Functionally, catalyzes the condensation of carbamoyl phosphate and aspartate to form carbamoyl aspartate and inorganic phosphate, the committed step in the de novo pyrimidine nucleotide biosynthesis pathway. This Azotobacter vinelandii (strain DJ / ATCC BAA-1303) protein is Aspartate carbamoyltransferase catalytic subunit.